Here is a 353-residue protein sequence, read N- to C-terminus: Putative transcription factor MTF1 (353 aa).

Polar residues-rich tracts occupy residues 11-26 (VTRS…TSPA) and 36-58 (EPSN…QQGN). 2 disordered regions span residues 11-96 (VTRS…ALPC) and 129-174 (FTTT…TTNP). Composition is skewed to low complexity over residues 59–95 (TEAS…PALP) and 133–145 (NSSP…SPSS). Residues 148 to 164 (SHTRKNSKYTVRHHRTR) are compositionally biased toward basic residues. Positions 165–174 (QSSFNGTTNP) are enriched in polar residues.

It localises to the nucleus. Its function is as follows. May be involved in transcriptional activation. This Mucor circinelloides f. lusitanicus (Mucor racemosus var. lusitanicus) protein is Putative transcription factor MTF1 (MTF1).